The following is a 243-amino-acid chain: Carboxy-S-adenosyl-L-methionine synthase (243 aa).

S-adenosyl-L-methionine-binding positions include tyrosine 40, 65-67 (GCS), 90-91 (DN), 118-119 (DI), asparagine 133, and arginine 200.

The protein belongs to the class I-like SAM-binding methyltransferase superfamily. Cx-SAM synthase family. As to quaternary structure, homodimer.

It catalyses the reaction prephenate + S-adenosyl-L-methionine = carboxy-S-adenosyl-L-methionine + 3-phenylpyruvate + H2O. Functionally, catalyzes the conversion of S-adenosyl-L-methionine (SAM) to carboxy-S-adenosyl-L-methionine (Cx-SAM). This is Carboxy-S-adenosyl-L-methionine synthase from Shewanella sp. (strain ANA-3).